A 331-amino-acid polypeptide reads, in one-letter code: Probable tRNA pseudouridine synthase B (331 aa).

D66 (nucleophile) is an active-site residue. Residues 233-307 (INKIIVKDSA…NEEDNREKYK (75 aa)) enclose the PUA domain.

The protein belongs to the pseudouridine synthase TruB family. Type 2 subfamily.

The enzyme catalyses uridine(55) in tRNA = pseudouridine(55) in tRNA. Could be responsible for synthesis of pseudouridine from uracil-55 in the psi GC loop of transfer RNAs. The chain is Probable tRNA pseudouridine synthase B from Methanococcus aeolicus (strain ATCC BAA-1280 / DSM 17508 / OCM 812 / Nankai-3).